The primary structure comprises 247 residues: Trypsin (247 aa).

Residues 1 to 21 (LTTVISYFALVAFALVGVSYA) form the signal peptide. Residues 22–30 (TPKASINGR) constitute a propeptide, activation peptide. The region spanning 31–247 (IVGGEMTDIS…QSNFPGVYGI (217 aa)) is the Peptidase S1 domain. Residues Cys61 and Cys77 are joined by a disulfide bond. Catalysis depends on charge relay system residues His76 and Asp120. 2 cysteine pairs are disulfide-bonded: Cys185–Cys201 and Cys212–Cys236. The active-site Charge relay system is the Ser216.

The protein belongs to the peptidase S1 family. In terms of tissue distribution, midgut.

The protein localises to the secreted. It localises to the extracellular space. It catalyses the reaction Preferential cleavage: Arg-|-Xaa, Lys-|-Xaa.. The chain is Trypsin from Simulium vittatum (Striped black fly).